Here is a 229-residue protein sequence, read N- to C-terminus: Casparian strip membrane protein 1 (229 aa).

At 1–67 (MSTSEAGAAA…FRRADRGSRC (67 aa)) the chain is on the cytoplasmic side. A helical membrane pass occupies residues 68 to 88 (VALLDFVLRVAAFGPALAAAI). Residues 89-115 (ATGTSDETLSVFTQFFQFHARFDDFPA) are Extracellular-facing. Residues 116–136 (LLFFMVANAIAAGYLVLSLPF) traverse the membrane as a helical segment. Over 137 to 157 (SAVIVLRPQAIGLRHLLLVCD) the chain is Cytoplasmic. A helical transmembrane segment spans residues 158–178 (MIIAALLTAAAAAAAAIVDLA). Residues 179–205 (HSGNLRANWVPICMQFHGFCQRTSGAV) are Extracellular-facing. A helical transmembrane segment spans residues 206-226 (VGSFLAVLVLLFLVILAAFAI). The Cytoplasmic segment spans residues 227-229 (RKR).

The protein belongs to the Casparian strip membrane proteins (CASP) family. As to quaternary structure, homodimer and heterodimers.

Its subcellular location is the cell membrane. In terms of biological role, regulates membrane-cell wall junctions and localized cell wall deposition. Required for establishment of the Casparian strip membrane domain (CSD) and the subsequent formation of Casparian strips, a cell wall modification of the root endodermis that determines an apoplastic barrier between the intraorganismal apoplasm and the extraorganismal apoplasm and prevents lateral diffusion. This Sorghum bicolor (Sorghum) protein is Casparian strip membrane protein 1.